A 1481-amino-acid polypeptide reads, in one-letter code: Cystic fibrosis transmembrane conductance regulator (1481 aa).

The Cytoplasmic portion of the chain corresponds to 1 to 77 (MQRSPLEKAS…KLINALRRCF (77 aa)). The chain crosses the membrane as a helical span at residues 78 to 98 (FWRFMFYGILLYLGEVTKAVQ). The region spanning 81–365 (FMFYGILLYL…WAVQTWYDSL (285 aa)) is the ABC transmembrane type-1 1 domain. At 99–122 (PLLLGRIIASYDPDNKEERSIAIY) the chain is on the extracellular side. Residues 123–146 (LGIGLCLLFIVRTLLLHPAIFGLH) form a helical membrane-spanning segment. The Cytoplasmic portion of the chain corresponds to 147–195 (HIGMQMRIAMFSLIYKKTLKLSSRVLDKISIGQLVSLLSNNLNKFDEGL). A helical membrane pass occupies residues 196-216 (ALAHFVWIVPLQVALLMGLIW). The Extracellular segment spans residues 217 to 222 (ELLQAS). The helical transmembrane segment at 223–243 (AFCGLGFLIVLALFQAGLGRM) threads the bilayer. Residues 244–298 (MMKYRDQRAGKINERLVITSEMIENIQSVKAYCWEEAMEKMIENLRQTELKLTRK) are Cytoplasmic-facing. A helical membrane pass occupies residues 299–319 (AAYVRYFNSSAFFFSGFFVVF). The Extracellular portion of the chain corresponds to 320–339 (LSVLPYALIKGIVLRKIFTT). The chain crosses the membrane as a helical span at residues 340-358 (ISFCIVLRMAVTRQFPWAV). At 359-858 (QTWYDSLGAI…YLRYITVHKS (500 aa)) the chain is on the cytoplasmic side. ATP contacts are provided by residues Trp401, Ser434, 458–465 (GSTGAGKT), and Gln493. In terms of domain architecture, ABC transporter 1 spans 423–646 (NDDDSLFFSN…RPDFSSKLMG (224 aa)). Cys524 carries the S-palmitoyl cysteine lipid modification. A phosphoserine mark is found at Ser549 and Ser660. Residues 654–831 (SAERRNSILT…EEINEEDLKE (178 aa)) are disordered R region. Ser670 carries the post-translational modification Phosphoserine; by PKA. A Phosphoserine modification is found at Ser686. Lys688 is covalently cross-linked (Glycyl lysine isopeptide (Lys-Gly) (interchain with G-Cter in ubiquitin)). Ser700 and Ser712 each carry phosphoserine. At Thr717 the chain carries Phosphothreonine. Phosphoserine occurs at positions 737, 753, 768, 790, 795, and 813. The helical transmembrane segment at 859 to 879 (LIFVLIWCLVIFLAEVAASLV) threads the bilayer. The ABC transmembrane type-1 2 domain occupies 859 to 1155 (LIFVLIWCLV…AVNSSIDVDS (297 aa)). The Extracellular segment spans residues 880–918 (VLWFLGNTPPQDKGNSTYSRNNSYAVIITRTSSYYVFYI). Asn894 and Asn900 each carry an N-linked (GlcNAc...) asparagine glycan. The chain crosses the membrane as a discontinuously helical span at residues 919-939 (YVGVADTLLAMGFFRGLPLVH). Residues 940–990 (TLITVSKILHHKMLHSVLQAPMSTLNTLKAGGILNRFSKDIAILDDLLPLT) are Cytoplasmic-facing. The chain crosses the membrane as a helical span at residues 991–1011 (IFDFIQLLLIVIGAIAVVAVL). Topologically, residues 1012–1013 (QP) are extracellular. The chain crosses the membrane as a helical span at residues 1014–1034 (YIFVATVPVIVAFIMLRAYFL). The Cytoplasmic portion of the chain corresponds to 1035–1095 (QTSQQLKQLE…TANWFLYLST (61 aa)). The chain crosses the membrane as a helical span at residues 1096–1116 (LRWFQMRIEMIFVIFFIAVTF). At 1117 to 1130 (ISILTTGEGEGTVG) the chain is on the extracellular side. Residues 1131 to 1151 (IILTLAMNIMSTLQWAVNSSI) form a helical membrane-spanning segment. Residues 1152 to 1481 (DVDSLMRSVS…TEEEVQDTRL (330 aa)) are Cytoplasmic-facing. One can recognise an ABC transporter 2 domain in the interval 1211–1444 (MTVKDLTAKY…RSLFRQAISP (234 aa)). Residues Tyr1220 and 1245-1252 (GRTGSGKS) each bind ATP. Residues 1387-1481 (RTLKQAFADC…TEEEVQDTRL (95 aa)) form an interaction with GORASP2 region. Cys1396 carries the S-palmitoyl cysteine lipid modification. 2 positions are modified to phosphoserine: Ser1445 and Ser1457. Positions 1462–1481 (QPQIAALKEETEEEVQDTRL) are disordered. Residues 1471 to 1481 (ETEEEVQDTRL) show a composition bias toward acidic residues. Positions 1479–1481 (TRL) match the PDZ-binding motif.

It belongs to the ABC transporter superfamily. ABCC family. CFTR transporter (TC 3.A.1.202) subfamily. As to quaternary structure, monomer; does not require oligomerization for channel activity. May form oligomers in the membrane. Interacts with SLC26A3, SLC26A6 and NHERF1. Interacts with SHANK2. Interacts with MYO6. Interacts (via C-terminus) with GOPC (via PDZ domain); this promotes CFTR internalization and thereby decreases channel activity. Interacts with SLC4A7 through NHERF1. Found in a complex with MYO5B and RAB11A. Interacts with ANO1. Interacts with SLC26A8. Interacts with AHCYL1; the interaction increases CFTR activity. Interacts with CSE1L. The core-glycosylated form interacts with GORASP2 (via PDZ GRASP-type 1 domain) in respone to ER stress. Interacts with MARCHF2; the interaction leads to CFTR ubiqtuitination and degradation. Interacts with ADGRG2. In terms of processing, N-glycosylated. Phosphorylated; cAMP treatment promotes phosphorylation and activates the channel. Dephosphorylation decreases the ATPase activity (in vitro). Phosphorylation at PKA sites activates the channel. Phosphorylation at PKC sites enhances the response to phosphorylation by PKA. Phosphorylated by AMPK; this inhibits channel activity. Post-translationally, ubiquitinated, leading to its degradation in the lysosome. Deubiquitination by USP10 in early endosomes enhances its endocytic recycling to the cell membrane. Ubiquitinated by RNF185 during ER stress. Ubiquitinated by MARCHF2.

The protein resides in the apical cell membrane. Its subcellular location is the early endosome membrane. It localises to the cell membrane. It is found in the recycling endosome membrane. The protein localises to the endoplasmic reticulum membrane. The protein resides in the nucleus. It carries out the reaction ATP + H2O + closed Cl(-) channel = ADP + phosphate + open Cl(-) channel.. The catalysed reaction is chloride(in) = chloride(out). The enzyme catalyses hydrogencarbonate(in) = hydrogencarbonate(out). It catalyses the reaction ATP + H2O = ADP + phosphate + H(+). Epithelial ion channel that plays an important role in the regulation of epithelial ion and water transport and fluid homeostasis. Mediates the transport of chloride ions across the cell membrane. Possesses an intrinsic ATPase activity and utilizes ATP to gate its channel; the passive flow of anions through the channel is gated by cycles of ATP binding and hydrolysis by the ATP-binding domains. The ion channel is also permeable to HCO(3)(-); selectivity depends on the extracellular chloride concentration. Exerts its function also by modulating the activity of other ion channels and transporters. Contributes to the regulation of the pH and the ion content of the epithelial fluid layer. Modulates the activity of the epithelial sodium channel (ENaC) complex, in part by regulating the cell surface expression of the ENaC complex. May regulate bicarbonate secretion and salvage in epithelial cells by regulating the transporter SLC4A7. Can inhibit the chloride channel activity of ANO1. Plays a role in the chloride and bicarbonate homeostasis during sperm epididymal maturation and capacitation. This is Cystic fibrosis transmembrane conductance regulator from Chlorocebus aethiops (Green monkey).